Consider the following 335-residue polypeptide: Ornithine carbamoyltransferase (335 aa).

Carbamoyl phosphate contacts are provided by residues 56–59 (STRT), Gln-83, Arg-107, and 134–137 (HPTQ). Residues Asn-168, Asp-232, and 236–237 (SM) each bind L-ornithine. Residues 274 to 275 (CL) and Arg-320 each bind carbamoyl phosphate.

This sequence belongs to the aspartate/ornithine carbamoyltransferase superfamily. OTCase family.

The protein localises to the cytoplasm. The enzyme catalyses carbamoyl phosphate + L-ornithine = L-citrulline + phosphate + H(+). Its pathway is amino-acid biosynthesis; L-arginine biosynthesis; L-arginine from L-ornithine and carbamoyl phosphate: step 1/3. Functionally, reversibly catalyzes the transfer of the carbamoyl group from carbamoyl phosphate (CP) to the N(epsilon) atom of ornithine (ORN) to produce L-citrulline. The sequence is that of Ornithine carbamoyltransferase from Yersinia pseudotuberculosis serotype I (strain IP32953).